A 922-amino-acid polypeptide reads, in one-letter code: Autophagy-related protein 9B (922 aa).

2 disordered regions span residues 1–22 and 85–144; these read MVRR…DLGP and TPHN…MGPL. The Cytoplasmic segment spans residues 1-206; sequence MVRRTGWGGS…KIYSYHQRNG (206 aa). Residues 85-114 show a composition bias toward polar residues; the sequence is TPHNVLPTPTTPSTQAHPTMIHTSASPSWG. A compositionally biased stretch (low complexity) spans 115–124; that stretch reads SHSTPPLASA. The Tyrosine-based sorting signal motif lies at 150 to 153; that stretch reads YERL. The helical transmembrane segment at 207 to 227 threads the bilayer; the sequence is FACILLEDVFQLGQFIFIVTF. Topologically, residues 228 to 275 are lumenal; it reads TTFLLRCVDYNVLFNNQPKNHTRRGPLHSKVTLSDAILPSAQCAEKIH. Residues 276-296 form a helical membrane-spanning segment; it reads DSPLLVFLLVLAAGFWLFQLL. Topologically, residues 297–437 are cytoplasmic; sequence RSVCNLFSYW…GVLANRWRRT (141 aa). The stretch at 438–458 is an intramembrane region; sequence VLLLAAVNLALSPLVLAWQVL. The Cytoplasmic segment spans residues 459-523; the sequence is HAFYSHVELL…RAAEPPAPLR (65 aa). Residues 524–544 traverse the membrane as a helical segment; the sequence is ALLARQLVFFSGALFAALLVL. Residues 545-550 are Lumenal-facing; that stretch reads TIYDED. The chain crosses the membrane as a helical span at residues 551–571; that stretch reads VLAVEHVLTTMTALGVTATVA. Residues 572–624 lie on the Cytoplasmic side of the membrane; that stretch reads RSFIPEEQCQGRSSQLLLQAALAHMHYLPEEPGATGARASSYWQMAQLLQYRA. An intramembrane segment occupies 625-645; the sequence is VSLLEELLSPLLTPLFLLFWF. The Cytoplasmic portion of the chain corresponds to 646-922; the sequence is RPRALEIIDF…QKEPLTGPLH (277 aa). Residues 848-922 form a disordered region; the sequence is ELWGEASASS…QKEPLTGPLH (75 aa). 2 stretches are compositionally biased toward low complexity: residues 854–870 and 877–889; these read SASS…QPGS and SWSS…ASSP. The span at 890-899 shows a compositional bias: polar residues; it reads RQQWGTQRAQ.

This sequence belongs to the ATG9 family. In terms of assembly, homotrimer; forms a homotrimer with a central pore that forms a path between the two membrane leaflets. In terms of tissue distribution, expressed in heart, brain, and placenta and testis.

It is found in the preautophagosomal structure membrane. It catalyses the reaction a 1,2-diacyl-sn-glycero-3-phosphocholine(in) = a 1,2-diacyl-sn-glycero-3-phosphocholine(out). It carries out the reaction a 1,2-diacyl-sn-glycero-3-phospho-L-serine(in) = a 1,2-diacyl-sn-glycero-3-phospho-L-serine(out). The enzyme catalyses a 1,2-diacyl-sn-glycero-3-phosphoethanolamine(in) = a 1,2-diacyl-sn-glycero-3-phosphoethanolamine(out). Functionally, phospholipid scramblase involved in autophagy by mediating autophagosomal membrane expansion. Cycles between the preautophagosomal structure/phagophore assembly site (PAS) and the cytoplasmic vesicle pool and supplies membrane for the growing autophagosome. Lipid scramblase activity plays a key role in preautophagosomal structure/phagophore assembly by distributing the phospholipids that arrive through ATG2 (ATG2A or ATG2B) from the cytoplasmic to the luminal leaflet of the bilayer, thereby driving autophagosomal membrane expansion. In addition to autophagy, also plays a role in necrotic cell death. The polypeptide is Autophagy-related protein 9B (Mus musculus (Mouse)).